The primary structure comprises 359 residues: Glycerol-1-phosphate dehydrogenase [NAD(P)+] (359 aa).

NAD(+)-binding positions include 107-111 (GRVID) and 129-132 (TAAS). Residue Asp134 coordinates substrate. Ser138 is a binding site for NAD(+). Substrate is bound at residue Asp181. Zn(2+) is bound by residues Asp181 and His261. Residue His265 coordinates substrate. His277 is a binding site for Zn(2+).

This sequence belongs to the glycerol-1-phosphate dehydrogenase family. Zn(2+) is required as a cofactor.

The protein resides in the cytoplasm. The catalysed reaction is sn-glycerol 1-phosphate + NAD(+) = dihydroxyacetone phosphate + NADH + H(+). It catalyses the reaction sn-glycerol 1-phosphate + NADP(+) = dihydroxyacetone phosphate + NADPH + H(+). Its pathway is membrane lipid metabolism; glycerophospholipid metabolism. Its function is as follows. Catalyzes the NAD(P)H-dependent reduction of dihydroxyacetonephosphate (DHAP or glycerone phosphate) to glycerol 1-phosphate (G1P). The G1P thus generated is used as the glycerophosphate backbone of phospholipids in the cellular membranes of Archaea. This Methanoregula boonei (strain DSM 21154 / JCM 14090 / 6A8) protein is Glycerol-1-phosphate dehydrogenase [NAD(P)+].